Here is a 328-residue protein sequence, read N- to C-terminus: Cell cycle control protein 50A (328 aa).

Residues 1–28 are disordered; sequence MAMNYSAKDEVDGGPTGPPGGAAKTRRP. An N-acetylalanine modification is found at Ala-2. The required for ATPase and aminophospholipid flippase activity stretch occupies residues 2–48; it reads AMNYSAKDEVDGGPTGPPGGAAKTRRPDNTAFKQQRLPAWQPILTAG. The Cytoplasmic segment spans residues 2 to 49; the sequence is AMNYSAKDEVDGGPTGPPGGAAKTRRPDNTAFKQQRLPAWQPILTAGT. Residues 49-315 are interaction with ATP8A2; the sequence is TVLPTFFIIG…LGVVLLVINH (267 aa). Residues 50–70 traverse the membrane as a helical segment; sequence VLPTFFIIGLIFIPIGIGIFV. Residues 71–292 are Exoplasmic loop-facing; that stretch reads TSNNIREIEG…SWMGGKNPFL (222 aa). The segment at 102-125 is disordered; the sequence is RDDSQLNGDPSALLNPSKECEPYR. Residues Cys-121 and Cys-135 are joined by a disulfide bond. Asn-144 and Asn-261 each carry an N-linked (GlcNAc...) asparagine glycan. The chain crosses the membrane as a helical span at residues 293–313; sequence GIAYITIGSISFLLGVVLLVI. Over 314–328 the chain is Cytoplasmic; sequence NHKYRNSSNTADITI.

Belongs to the CDC50/LEM3 family. In terms of assembly, component of various P4-ATPase flippase complexes which consists of a catalytic alpha subunit and an accessory beta subunit. Interacts with ATP8A1 to form a flippase complex; this complex forms an intermediate phosphoenzyme. Interacts with ATP8A2 to form a flippase complex. TP8B1:TMEM30A and ATP8B2:TMEM30A flippase complexes have been shown to form intermediate phosphoenzymes in vitro. Interacts with alpha subunits ATP8A1, ATP8B1, ATP8B2, ATP8B4, ATP10A, ATP10B, ATP10D, ATP11A, ATP11B and ATP11C. In terms of processing, N-glycosylated. Contains high mannose-type oligosaccharides.

Its subcellular location is the membrane. The protein resides in the golgi apparatus. It localises to the cytoplasmic vesicle. It is found in the secretory vesicle membrane. The protein localises to the apical cell membrane. Its subcellular location is the photoreceptor inner segment. The protein resides in the cell projection. It localises to the cilium. It is found in the photoreceptor outer segment. Functionally, accessory component of a P4-ATPase flippase complex which catalyzes the hydrolysis of ATP coupled to the transport of aminophospholipids from the outer to the inner leaflet of various membranes and ensures the maintenance of asymmetric distribution of phospholipids. Phospholipid translocation also seems to be implicated in vesicle formation and in uptake of lipid signaling molecules. The beta subunit may assist in binding of the phospholipid substrate. Required for the proper folding, assembly and ER to Golgi exit of the ATP8A2:TMEM30A flippase complex. ATP8A2:TMEM30A may be involved in regulation of neurite outgrowth, and, reconstituted to liposomes, predomiminantly transports phosphatidylserine (PS) and to a lesser extent phosphatidylethanolamine (PE). The ATP8A1:TMEM30A flippase complex seems to play a role in regulation of cell migration probably involving flippase-mediated translocation of phosphatidylethanolamine (PE) at the plasma membrane. Required for the formation of the ATP8A2, ATP8B1 and ATP8B2 P-type ATPAse intermediate phosphoenzymes. Involved in uptake of platelet-activating factor (PAF). Can also mediate the export of alpha subunits ATP8A1, ATP8B1, ATP8B2, ATP8B4, ATP10A, ATP10B, ATP10D, ATP11A, ATP11B and ATP11C from ER to other membrane localizations. In Rattus norvegicus (Rat), this protein is Cell cycle control protein 50A.